The primary structure comprises 190 residues: UPF0301 protein Rmet_2743 (190 aa).

The protein belongs to the UPF0301 (AlgH) family.

This is UPF0301 protein Rmet_2743 from Cupriavidus metallidurans (strain ATCC 43123 / DSM 2839 / NBRC 102507 / CH34) (Ralstonia metallidurans).